The chain runs to 876 residues: Alanine--tRNA ligase (876 aa).

Lys74 is modified (N6-acetyllysine). Zn(2+) contacts are provided by His564, His568, Cys666, and His670.

The protein belongs to the class-II aminoacyl-tRNA synthetase family. In terms of assembly, homotetramer. The cofactor is Zn(2+).

The protein localises to the cytoplasm. The catalysed reaction is tRNA(Ala) + L-alanine + ATP = L-alanyl-tRNA(Ala) + AMP + diphosphate. Functionally, catalyzes the attachment of alanine to tRNA(Ala) in a two-step reaction: alanine is first activated by ATP to form Ala-AMP and then transferred to the acceptor end of tRNA(Ala). Also edits incorrectly charged Ser-tRNA(Ala) and Gly-tRNA(Ala) via its editing domain. The chain is Alanine--tRNA ligase from Escherichia coli O6:K15:H31 (strain 536 / UPEC).